A 402-amino-acid chain; its full sequence is tRNA(Met) cytidine acetate ligase (402 aa).

Residues 7–20, glycine 102, asparagine 171, and arginine 196 each bind ATP; that span reads ITEY…HELH.

It belongs to the TmcAL family.

Its subcellular location is the cytoplasm. It catalyses the reaction cytidine(34) in elongator tRNA(Met) + acetate + ATP = N(4)-acetylcytidine(34) in elongator tRNA(Met) + AMP + diphosphate. Functionally, catalyzes the formation of N(4)-acetylcytidine (ac(4)C) at the wobble position of elongator tRNA(Met), using acetate and ATP as substrates. First activates an acetate ion to form acetyladenylate (Ac-AMP) and then transfers the acetyl group to tRNA to form ac(4)C34. The chain is tRNA(Met) cytidine acetate ligase from Clostridium perfringens (strain SM101 / Type A).